The following is a 308-amino-acid chain: Pantoate--beta-alanine ligase (308 aa).

A propeptide (removed; partial) is located at residue A2.

This sequence belongs to the pantothenate synthetase family. In terms of assembly, homodimer. In terms of tissue distribution, expressed at low levels in leaf and root.

Its subcellular location is the cytoplasm. The catalysed reaction is (R)-pantoate + beta-alanine + ATP = (R)-pantothenate + AMP + diphosphate + H(+). It functions in the pathway cofactor biosynthesis; (R)-pantothenate biosynthesis; (R)-pantothenate from (R)-pantoate and beta-alanine: step 1/1. The polypeptide is Pantoate--beta-alanine ligase (PANC) (Lotus japonicus (Lotus corniculatus var. japonicus)).